The sequence spans 302 residues: MHVLLIAGGWSEEREVSLSGAKGIEQALLELGHDVEFVDPAKDFKNILLLAEHADFAFINLHGSPGEDGLIQAMLNQVNCPYQGAEPESSFLTLNKAATKTVFDHHGILTPKWELVCAADGCKGLQDLEPPVFIKPNSGGSSLGMTFARTAEELEKGIETVFSLGDSALVEEYTKGIEVTCGILDGEPMPLILINPPDNAEFFDYHSKYALDGAEEICPAPIDPVLTEQIQQITAKAHKLLGLTDYSRADFIISEGVPYLLEVNTLPGMTPTSLVPQAAKEAGYSFNELIAKLIELGQRKRK.

Residues 100–295 (KTVFDHHGIL…FNELIAKLIE (196 aa)) form the ATP-grasp domain. Residue 126-180 (QDLEPPVFIKPNSGGSSLGMTFARTAEELEKGIETVFSLGDSALVEEYTKGIEVT) coordinates ATP. Residues D250, E262, and N264 each contribute to the Mg(2+) site.

Belongs to the D-alanine--D-alanine ligase family. Requires Mg(2+) as cofactor. Mn(2+) is required as a cofactor.

The protein localises to the cytoplasm. The catalysed reaction is 2 D-alanine + ATP = D-alanyl-D-alanine + ADP + phosphate + H(+). The protein operates within cell wall biogenesis; peptidoglycan biosynthesis. Its function is as follows. Cell wall formation. This Maridesulfovibrio salexigens (strain ATCC 14822 / DSM 2638 / NCIMB 8403 / VKM B-1763) (Desulfovibrio salexigens) protein is D-alanine--D-alanine ligase.